Here is a 1166-residue protein sequence, read N- to C-terminus: MGVEFLVGRSGSGKTRLIIDSIQDELRREPFGKPIIFLVPDQMTFLMEYELAKTPDIGGMIRAQVFSFSRLAWRVLQHTGGMNRPFVTTTGVQMLLRKLIEEHKHEFKVYQKASDKTGFTEQVERMLTEFKRYCIEPEDVRRMAESGTASEYRGERMLSEKLHDLGILYQQMERSLAGHYLHSEDYLTLLAQQIPLADVVKGAHVYVDGFYQFTPQELRVLEQLIMHAEHVTFSLTADSPSAEQAPDELDLFRMTGSTYYKLYQTAKELNADISCKELHGTKRHQHAPELACIESQYDVRPAAAYTGGQEAFTVMQAQNRRAELEGIAREIQSLVRDGGYRYKDMAILIRQPEDYKDLLKEVFADYGLPYFIDGKASMQHHPLIEFIRSSLDVVKGNWRYEAVFRCAKTELLFPLDQPEQKIREQVDQLENYCIAYGIKGERWTSGERFVYRRFVSLDEDFAQTDQEIEMEHMLNETKEWMAAPLVKLQNRMKKAKTVQSMAEALYLFLEDTDVPLKLDRKRQRAEEAGNMIEAQQHGQAWDAVIQLLEEFAGMMGEDEISLALFQQMLETGTESLHFSLIPPALDQVFVGNMDLSRMYGTSCTFVIGANDGVLPARPDENGVLSDDDREWLKAVGVELSSAGRERLLDEHFLIYMALSSPSDRLYVSYPIADAEGKTLLPSIVVNRLGELFPDHQEKLSAADPEQVSEEEQLQYLVNKQVAQTYTASQLRLWTREYEISDVWWSAYNVLMKEPDHRRAKKLFSSLFFRNEAKRLERPVSRQLYGEHIKGSVSRMEAFNACQFSHFASHGLQLKERQFFKLDAPDIGQLFHSSLKLISDRLREQKLEWRDLTKDQCRNFSYEAVERLAPKLQKEILLSSNRHFYVKEKLQKIVTRVSGILSEHAKASGFVPVGLELGFGGSGPLPPLTFTLKNGCTMELVGRIDRVDKAESSKGLLLRIVDYKSSDRGLDLAEVYYGLALQMLTYLDLSITHSEDWLGMKATPAGVLYFHIHDPMIQASLPMGLDEIEQEIFKKFKMKGLLLGDREAISLMDTTLEEGRSNIVNAGLKKDGSLRSDSAAVSEQDFHLLTDHVRRTFEQAGEAITDGLVSITPYKLKDKTPCTYCAFQSVCQFDESLKENEYRSLKAEKDGTILDWLKKEADDDANS.

The region spanning Met-1–Ser-390 is the UvrD-like helicase ATP-binding domain. Gly-8–Thr-15 is a binding site for ATP. The UvrD-like helicase C-terminal domain maps to Thr-281 to Asp-586. 4 residues coordinate [4Fe-4S] cluster: Cys-801, Cys-1121, Cys-1124, and Cys-1130.

This sequence belongs to the helicase family. AddB/RexB type 1 subfamily. In terms of assembly, heterodimer of AddA and AddB. It depends on Mg(2+) as a cofactor. [4Fe-4S] cluster serves as cofactor.

In terms of biological role, the heterodimer acts as both an ATP-dependent DNA helicase and an ATP-dependent, dual-direction single-stranded exonuclease. Recognizes the chi site generating a DNA molecule suitable for the initiation of homologous recombination. The AddB subunit has 5' -&gt; 3' nuclease activity but not helicase activity. The protein is ATP-dependent helicase/deoxyribonuclease subunit B of Bacillus velezensis (strain DSM 23117 / BGSC 10A6 / LMG 26770 / FZB42) (Bacillus amyloliquefaciens subsp. plantarum).